We begin with the raw amino-acid sequence, 395 residues long: uncharacterized protein (395 aa).

The next 10 membrane-spanning stretches (helical) occupy residues 19–39 (IGIA…IAII), 49–69 (VLLI…IYEL), 87–107 (LTWI…AVGG), 137–157 (LVII…PLGT), 172–192 (YINL…FYLI), 206–226 (TINI…SLIA), 252–272 (LIGG…MGMG), 279–299 (LFIM…KILA), 311–331 (GLVF…GSLI), and 359–379 (VLCT…GAVI).

This sequence belongs to the chloride channel (TC 2.A.49) family.

The protein localises to the cell membrane. This is an uncharacterized protein from Methanocaldococcus jannaschii (strain ATCC 43067 / DSM 2661 / JAL-1 / JCM 10045 / NBRC 100440) (Methanococcus jannaschii).